The sequence spans 141 residues: HTH-type transcriptional repressor NsrR (141 aa).

Residues glutamine 2 to glutamate 129 form the HTH rrf2-type domain. Positions isoleucine 28 to arginine 51 form a DNA-binding region, H-T-H motif. [2Fe-2S] cluster is bound by residues cysteine 91, cysteine 96, and cysteine 102.

[2Fe-2S] cluster serves as cofactor.

Functionally, nitric oxide-sensitive repressor of genes involved in protecting the cell against nitrosative stress. May require iron for activity. The chain is HTH-type transcriptional repressor NsrR from Escherichia coli O127:H6 (strain E2348/69 / EPEC).